The following is a 539-amino-acid chain: Protein lin-14 (539 aa).

2 disordered regions span residues 162–230 and 262–293; these read PTLP…SNHS and ETAPPLRVAPPINGTTNGTAKAGGPERKPRKP. Polar residues-rich tracts occupy residues 163 to 183 and 193 to 214; these read TLPNGQIPTTIGETSLQGTDD and SVDSNGQKTDSSAASAGDNQNI. A compositionally biased stretch (low complexity) spans 274–284; it reads NGTTNGTAKAG. The tract at residues 296–440 is involved in sequence-specific DNA-binding; the sequence is DDIVKIVRNQ…CRRVRHAKKT (145 aa).

Post-translationally, cleaved by caspase ced-3 in vitro. High levels in hypodermal, intestinal, body wall muscle, nerve ring, and ventral nerve cord cells of embryos and L1 animals.

It is found in the nucleus. Its function is as follows. Heterochronic protein which controls the choice of stage specific cell fates. Involved in the temporal progression of vulval fate patterning, possibly by inhibiting lin-12. Acts as a transcription factor involved in the stage-specific repression of various genes, including insulin/insulin-like growth factor gene ins-33 and neuropeptide-encoding gene nlp-45. Binds to the consensus sequence 5'-[CT]GGA[AG]-3' in the regulatory elements of target genes. Plays a role in governing the developmental timing of male tail tip morphogenesis. Plays a role in controlling the timing of seam cell development during the larval stages. Plays a role in promoting survival at high temperatures in larvae. Involved in maintenance of the architecture of the ventral nerve cord, perhaps acting via modulating expression of the immunoglobulin domain gene zig-4. May specify L2 and later cell fates, creating a temporal switch. In terms of biological role, may be involved in specifying L1 cell fates. In Caenorhabditis elegans, this protein is Protein lin-14.